We begin with the raw amino-acid sequence, 371 residues long: Deoxyhypusine synthase (371 aa).

Residues 112–116 (SNLVT), 138–140 (SAG), glutamate 144, and aspartate 245 each bind NAD(+). 143–144 (EE) contributes to the spermidine binding site. Residue aspartate 250 participates in spermidine binding. Glycine 291 contacts NAD(+). Histidine 296 is a spermidine binding site. 316–317 (TG) provides a ligand contact to NAD(+). Spermidine-binding positions include 322-324 (GSD) and 331-337 (EAVSWGK). The active-site Nucleophile is the lysine 337. NAD(+) is bound at residue 350 to 351 (EA).

This sequence belongs to the deoxyhypusine synthase family. It depends on NAD(+) as a cofactor.

It catalyses the reaction [eIF5A protein]-L-lysine + spermidine = [eIF5A protein]-deoxyhypusine + propane-1,3-diamine. It functions in the pathway protein modification; eIF5A hypusination. Its function is as follows. Catalyzes the NAD-dependent oxidative cleavage of spermidine and the subsequent transfer of the butylamine moiety of spermidine to the epsilon-amino group of a critical lysine residue of the eIF-5A precursor protein to form the intermediate deoxyhypusine residue. This is the first step of the post-translational modification of that lysine into an unusual amino acid residue named hypusine. Hypusination is unique to mature eIF-5A factor and is essential for its function. This chain is Deoxyhypusine synthase, found in Caenorhabditis elegans.